The primary structure comprises 434 residues: Probable phosphoglucosamine mutase (434 aa).

The Phosphoserine intermediate role is filled by serine 91. 4 residues coordinate Mg(2+): serine 91, aspartate 229, aspartate 231, and aspartate 233. Serine 91 bears the Phosphoserine mark.

This sequence belongs to the phosphohexose mutase family. Mg(2+) serves as cofactor. Activated by phosphorylation.

It carries out the reaction alpha-D-glucosamine 1-phosphate = D-glucosamine 6-phosphate. Functionally, catalyzes the conversion of glucosamine-6-phosphate to glucosamine-1-phosphate. The sequence is that of Probable phosphoglucosamine mutase from Methanosarcina acetivorans (strain ATCC 35395 / DSM 2834 / JCM 12185 / C2A).